The sequence spans 383 residues: S-adenosylmethionine synthase (383 aa).

H15 contacts ATP. D17 is a binding site for Mg(2+). Residue E43 coordinates K(+). E56 and Q99 together coordinate L-methionine. The flexible loop stretch occupies residues 99–109; it reads QSPDINQGVDR. ATP-binding positions include 164–166, 230–231, D239, 245–246, A262, and K266; these read DAK, RF, and RK. D239 contacts L-methionine. L-methionine is bound at residue K270.

It belongs to the AdoMet synthase family. As to quaternary structure, homotetramer; dimer of dimers. The cofactor is Mg(2+). K(+) serves as cofactor.

The protein localises to the cytoplasm. It carries out the reaction L-methionine + ATP + H2O = S-adenosyl-L-methionine + phosphate + diphosphate. Its pathway is amino-acid biosynthesis; S-adenosyl-L-methionine biosynthesis; S-adenosyl-L-methionine from L-methionine: step 1/1. Its function is as follows. Catalyzes the formation of S-adenosylmethionine (AdoMet) from methionine and ATP. The overall synthetic reaction is composed of two sequential steps, AdoMet formation and the subsequent tripolyphosphate hydrolysis which occurs prior to release of AdoMet from the enzyme. The chain is S-adenosylmethionine synthase from Pseudoalteromonas translucida (strain TAC 125).